The sequence spans 535 residues: RNA-splicing ligase RtcB homolog 1 (535 aa).

Positions 1 to 16 (MAKSRYSRKNKGKKLQ) are enriched in basic residues. The interval 1–29 (MAKSRYSRKNKGKKLQRVQENTVSTEEKS) is disordered. Positions 152, 155, 260, 292, and 383 each coordinate Mn(2+). Position 259–263 (259–263 (NHYLE)) interacts with GMP. GMP contacts are provided by residues 383–384 (HN), 432–435 (GGSM), S439, 458–461 (HGAG), and K534. The active-site GMP-histidine intermediate is H458.

This sequence belongs to the RtcB family. In terms of assembly, catalytic component of the tRNA-splicing ligase complex. It depends on Mn(2+) as a cofactor.

The enzyme catalyses a 3'-end 3'-phospho-ribonucleotide-RNA + a 5'-end dephospho-ribonucleoside-RNA + GTP = a ribonucleotidyl-ribonucleotide-RNA + GMP + diphosphate. The catalysed reaction is a 3'-end 2',3'-cyclophospho-ribonucleotide-RNA + a 5'-end dephospho-ribonucleoside-RNA + GTP + H2O = a ribonucleotidyl-ribonucleotide-RNA + GMP + diphosphate + H(+). In terms of biological role, catalytic subunit of the tRNA-splicing ligase complex that acts by directly joining spliced tRNA halves to mature-sized tRNAs by incorporating the precursor-derived splice junction phosphate into the mature tRNA as a canonical 3',5'-phosphodiester. May act as an RNA ligase with broad substrate specificity, and may function toward other RNAs. This Entamoeba dispar (strain ATCC PRA-260 / SAW760) protein is RNA-splicing ligase RtcB homolog 1.